Reading from the N-terminus, the 282-residue chain is Probable iron transport system membrane protein HI_0360 (282 aa).

A run of 8 helical transmembrane segments spans residues alanine 17–leucine 37, leucine 63–isoleucine 83, alanine 93–asparagine 113, isoleucine 140–phenylalanine 160, threonine 164–leucine 184, alanine 186–threonine 206, isoleucine 223–leucine 243, and glycine 245–phenylalanine 265.

Belongs to the ABC-3 integral membrane protein family.

The protein resides in the cell inner membrane. Part of an ATP-driven transport system HI_0359/HI_0360/HI_0361/HI_0362 for iron. The protein is Probable iron transport system membrane protein HI_0360 of Haemophilus influenzae (strain ATCC 51907 / DSM 11121 / KW20 / Rd).